The following is a 391-amino-acid chain: Pyruvate dehydrogenase E1 component subunit beta-3, chloroplastic (391 aa).

The N-terminal 35 residues, 1–35 (MATAAAASLQYALHGAASASAKPRSAAPGRSVRVV), are a transit peptide targeting the chloroplast. Glutamate 127 contacts thiamine diphosphate. Positions 180, 228, 229, and 233 each coordinate K(+).

Tetramer of 2 alpha and 2 beta subunits. Requires thiamine diphosphate as cofactor.

Its subcellular location is the plastid. The protein localises to the chloroplast. The enzyme catalyses N(6)-[(R)-lipoyl]-L-lysyl-[protein] + pyruvate + H(+) = N(6)-[(R)-S(8)-acetyldihydrolipoyl]-L-lysyl-[protein] + CO2. Its function is as follows. The pyruvate dehydrogenase complex catalyzes the overall conversion of pyruvate to acetyl-CoA and CO(2). It contains multiple copies of three enzymatic components: pyruvate dehydrogenase (E1), dihydrolipoamide acetyltransferase (E2) and lipoamide dehydrogenase (E3). The sequence is that of Pyruvate dehydrogenase E1 component subunit beta-3, chloroplastic from Oryza sativa subsp. japonica (Rice).